A 287-amino-acid polypeptide reads, in one-letter code: Bifunctional protein FolD (287 aa).

Residues 165–167 (GRG), T192, and V233 each bind NADP(+).

It belongs to the tetrahydrofolate dehydrogenase/cyclohydrolase family. Homodimer.

It catalyses the reaction (6R)-5,10-methylene-5,6,7,8-tetrahydrofolate + NADP(+) = (6R)-5,10-methenyltetrahydrofolate + NADPH. The catalysed reaction is (6R)-5,10-methenyltetrahydrofolate + H2O = (6R)-10-formyltetrahydrofolate + H(+). The protein operates within one-carbon metabolism; tetrahydrofolate interconversion. Functionally, catalyzes the oxidation of 5,10-methylenetetrahydrofolate to 5,10-methenyltetrahydrofolate and then the hydrolysis of 5,10-methenyltetrahydrofolate to 10-formyltetrahydrofolate. The sequence is that of Bifunctional protein FolD from Cutibacterium acnes (strain DSM 16379 / KPA171202) (Propionibacterium acnes).